A 324-amino-acid chain; its full sequence is Acetyl-coenzyme A carboxylase carboxyl transferase subunit alpha (324 aa).

Residues 44–298 (QLERRAEELR…KQTLIDTIDE (255 aa)) enclose the CoA carboxyltransferase C-terminal domain.

The protein belongs to the AccA family. Acetyl-CoA carboxylase is a heterohexamer composed of biotin carboxyl carrier protein (AccB), biotin carboxylase (AccC) and two subunits each of ACCase subunit alpha (AccA) and ACCase subunit beta (AccD).

The protein localises to the cytoplasm. The catalysed reaction is N(6)-carboxybiotinyl-L-lysyl-[protein] + acetyl-CoA = N(6)-biotinyl-L-lysyl-[protein] + malonyl-CoA. The protein operates within lipid metabolism; malonyl-CoA biosynthesis; malonyl-CoA from acetyl-CoA: step 1/1. Its function is as follows. Component of the acetyl coenzyme A carboxylase (ACC) complex. First, biotin carboxylase catalyzes the carboxylation of biotin on its carrier protein (BCCP) and then the CO(2) group is transferred by the carboxyltransferase to acetyl-CoA to form malonyl-CoA. In Rippkaea orientalis (strain PCC 8801 / RF-1) (Cyanothece sp. (strain PCC 8801)), this protein is Acetyl-coenzyme A carboxylase carboxyl transferase subunit alpha.